Here is a 463-residue protein sequence, read N- to C-terminus: Pentatricopeptide repeat-containing protein At2g17670 (463 aa).

The tract at residues M1–P63 is disordered. PPR repeat units follow at residues G121–P157, D158–P192, D193–D223, D229–P263, D264–P298, D299–P333, D334–P368, N369–L403, and E404–S438.

Belongs to the PPR family. P subfamily.

The protein is Pentatricopeptide repeat-containing protein At2g17670 of Arabidopsis thaliana (Mouse-ear cress).